Here is a 517-residue protein sequence, read N- to C-terminus: V-type proton ATPase subunit B (517 aa).

At Ser-4 the chain carries Phosphoserine. Lys-14 is covalently cross-linked (Glycyl lysine isopeptide (Lys-Gly) (interchain with G-Cter in ubiquitin)). Ser-137 bears the Phosphoserine mark. Arg-381 contributes to the ATP binding site. A disordered region spans residues 487–517 (RARDDADEDEEDPDTRSSGKKKDASQEESLI). The span at 500–511 (DTRSSGKKKDAS) shows a compositional bias: basic and acidic residues. Ser-503 and Ser-504 each carry phosphoserine. A Glycyl lysine isopeptide (Lys-Gly) (interchain with G-Cter in ubiquitin) cross-link involves residue Lys-508. Position 511 is a phosphoserine; by ATM or ATR (Ser-511). Ser-515 is modified (phosphoserine).

The protein belongs to the ATPase alpha/beta chains family. In terms of assembly, V-ATPase is a heteromultimeric enzyme composed of a peripheral catalytic V1 complex (components A to H) attached to an integral membrane V0 proton pore complex (components: a, c, c', c'', d, e, f and VOA1). Interacts with RAV1 and RAV2 components of the RAVE complex, which are essential for the stability and assembly of V-ATPase.

The protein localises to the vacuole membrane. Its function is as follows. Non-catalytic subunit of the V1 complex of vacuolar(H+)-ATPase (V-ATPase), a multisubunit enzyme composed of a peripheral complex (V1) that hydrolyzes ATP and a membrane integral complex (V0) that translocates protons. V-ATPase is responsible for acidifying and maintaining the pH of intracellular compartments. This Saccharomyces cerevisiae (strain ATCC 204508 / S288c) (Baker's yeast) protein is V-type proton ATPase subunit B (VMA2).